We begin with the raw amino-acid sequence, 157 residues long: Protein Smg (157 aa).

Belongs to the Smg family.

This is Protein Smg from Yersinia pseudotuberculosis serotype O:1b (strain IP 31758).